A 416-amino-acid chain; its full sequence is Exodeoxyribonuclease 7 large subunit (416 aa).

This sequence belongs to the XseA family. In terms of assembly, heterooligomer composed of large and small subunits.

The protein resides in the cytoplasm. It catalyses the reaction Exonucleolytic cleavage in either 5'- to 3'- or 3'- to 5'-direction to yield nucleoside 5'-phosphates.. Its function is as follows. Bidirectionally degrades single-stranded DNA into large acid-insoluble oligonucleotides, which are then degraded further into small acid-soluble oligonucleotides. This Sulfurimonas denitrificans (strain ATCC 33889 / DSM 1251) (Thiomicrospira denitrificans (strain ATCC 33889 / DSM 1251)) protein is Exodeoxyribonuclease 7 large subunit.